A 70-amino-acid chain; its full sequence is Small, acid-soluble spore protein 1 (70 aa).

It belongs to the alpha/beta-type SASP family.

In terms of biological role, SASP are bound to spore DNA. They are double-stranded DNA-binding proteins that cause DNA to change to an a-like conformation. They protect the DNA backbone from chemical and enzymatic cleavage and are thus involved in dormant spore's high resistance to UV light. In Bacillus subtilis, this protein is Small, acid-soluble spore protein 1.